Here is a 291-residue protein sequence, read N- to C-terminus: 4-hydroxy-tetrahydrodipicolinate synthase (291 aa).

Threonine 44 contacts pyruvate. Tyrosine 132 (proton donor/acceptor) is an active-site residue. The active-site Schiff-base intermediate with substrate is the lysine 160. Isoleucine 202 is a pyruvate binding site.

This sequence belongs to the DapA family. In terms of assembly, homotetramer; dimer of dimers.

It is found in the cytoplasm. It carries out the reaction L-aspartate 4-semialdehyde + pyruvate = (2S,4S)-4-hydroxy-2,3,4,5-tetrahydrodipicolinate + H2O + H(+). It functions in the pathway amino-acid biosynthesis; L-lysine biosynthesis via DAP pathway; (S)-tetrahydrodipicolinate from L-aspartate: step 3/4. Its function is as follows. Catalyzes the condensation of (S)-aspartate-beta-semialdehyde [(S)-ASA] and pyruvate to 4-hydroxy-tetrahydrodipicolinate (HTPA). This is 4-hydroxy-tetrahydrodipicolinate synthase from Roseobacter denitrificans (strain ATCC 33942 / OCh 114) (Erythrobacter sp. (strain OCh 114)).